The chain runs to 193 residues: Thioredoxin reductase-like selenoprotein T1b (193 aa).

Residues 1–21 form the signal peptide; that stretch reads METRCLYLLLVCVLSVNHATA. Residues 44–47 constitute a cross-link (cysteinyl-selenocysteine (Cys-Sec)); that stretch reads CVSU. Position 47 (U47) is a non-standard amino acid, selenocysteine.

It belongs to the SelWTH family. Selenoprotein T subfamily. May contain a selenide-sulfide bond between Cys-44 and Sec-47. This bond is speculated to serve as redox-active pair. Widely expressed in the embryo. High level in embryonic blood at 24 hours post-fertilization (hpf).

It localises to the endoplasmic reticulum membrane. The enzyme catalyses [thioredoxin]-dithiol + NADP(+) = [thioredoxin]-disulfide + NADPH + H(+). In terms of biological role, selenoprotein with thioredoxin reductase-like oxidoreductase activity. The sequence is that of Thioredoxin reductase-like selenoprotein T1b from Danio rerio (Zebrafish).